A 326-amino-acid chain; its full sequence is DNA-directed RNA polymerase subunit alpha (326 aa).

The alpha N-terminal domain (alpha-NTD) stretch occupies residues 1-232; that stretch reads MQGSARDFLK…EQLSSFVELE (232 aa). Residues 246-326 are alpha C-terminal domain (alpha-CTD); the sequence is FDPQLLAAVD…NWPPVDLMSE (81 aa).

This sequence belongs to the RNA polymerase alpha chain family. As to quaternary structure, homodimer. The RNAP catalytic core consists of 2 alpha, 1 beta, 1 beta' and 1 omega subunit. When a sigma factor is associated with the core the holoenzyme is formed, which can initiate transcription.

The catalysed reaction is RNA(n) + a ribonucleoside 5'-triphosphate = RNA(n+1) + diphosphate. DNA-dependent RNA polymerase catalyzes the transcription of DNA into RNA using the four ribonucleoside triphosphates as substrates. The sequence is that of DNA-directed RNA polymerase subunit alpha from Vesicomyosocius okutanii subsp. Calyptogena okutanii (strain HA).